The primary structure comprises 196 residues: Small ribosomal subunit protein uS4c (196 aa).

The tract at residues A17–F36 is disordered. The 69-residue stretch at M89–P157 folds into the S4 RNA-binding domain.

The protein belongs to the universal ribosomal protein uS4 family. Part of the 30S ribosomal subunit. Contacts protein S5. The interaction surface between S4 and S5 is involved in control of translational fidelity.

It is found in the plastid. The protein resides in the chloroplast. Functionally, one of the primary rRNA binding proteins, it binds directly to 16S rRNA where it nucleates assembly of the body of the 30S subunit. With S5 and S12 plays an important role in translational accuracy. The polypeptide is Small ribosomal subunit protein uS4c (rps4) (Calamagrostis epigeios (Wood small-reed grass)).